A 445-amino-acid polypeptide reads, in one-letter code: Xylose isomerase (445 aa).

Active-site residues include His99 and Asp102. Mg(2+) is bound by residues Glu230, Glu266, His269, Asp294, Asp305, Asp307, and Asp337.

It belongs to the xylose isomerase family. As to quaternary structure, homotetramer. The cofactor is Mg(2+).

Its subcellular location is the cytoplasm. The catalysed reaction is alpha-D-xylose = alpha-D-xylulofuranose. This Geobacillus kaustophilus (strain HTA426) protein is Xylose isomerase.